The primary structure comprises 344 residues: 4-dimethylallyltryptophan N-methyltransferase easF (344 aa).

This sequence belongs to the methyltransferase superfamily. In terms of assembly, homodimer.

The enzyme catalyses 4-(3-methylbut-2-enyl)-L-tryptophan + S-adenosyl-L-methionine = 4-(3-methylbut-2-enyl)-L-abrine + S-adenosyl-L-homocysteine + H(+). Its pathway is alkaloid biosynthesis; ergot alkaloid biosynthesis. Its function is as follows. 4-dimethylallyltryptophan N-methyltransferase; part of the gene cluster that mediates the biosynthesis of fungal ergot alkaloid. DmaW catalyzes the first step of ergot alkaloid biosynthesis by condensing dimethylallyl diphosphate (DMAP) and tryptophan to form 4-dimethylallyl-L-tryptophan. The second step is catalyzed by the methyltransferase easF that methylates 4-dimethylallyl-L-tryptophan in the presence of S-adenosyl-L-methionine, resulting in the formation of 4-dimethylallyl-L-abrine. The catalase easC and the FAD-dependent oxidoreductase easE then transform 4-dimethylallyl-L-abrine to chanoclavine-I which is further oxidized by easD in the presence of NAD(+), resulting in the formation of chanoclavine-I aldehyde. Agroclavine dehydrogenase easG then mediates the conversion of chanoclavine-I aldehyde to agroclavine via a non-enzymatic adduct reaction: the substrate is an iminium intermediate that is formed spontaneously from chanoclavine-I aldehyde in the presence of glutathione. The presence of easA is not required to complete this reaction. Further conversion of agroclavine to paspalic acid is a two-step process involving oxidation of agroclavine to elymoclavine and of elymoclavine to paspalic acid, the second step being performed by the elymoclavine oxidase cloA. Paspalic acid is then further converted to D-lysergic acid. Ergopeptines are assembled from D-lysergic acid and three different amino acids by the D-lysergyl-peptide-synthetases composed each of a monomudular and a trimodular nonribosomal peptide synthetase subunit. LpsB and lpsC encode the monomodular subunits responsible for D-lysergic acid activation and incorporation into the ergopeptine backbone. LpsA1 and A2 subunits encode the trimodular nonribosomal peptide synthetase assembling the tripeptide portion of ergopeptines. LpsA1 is responsible for formation of the major ergopeptine, ergotamine, and lpsA2 for alpha-ergocryptine, the minor ergopeptine of the total alkaloid mixture elaborated by C.purpurea. D-lysergyl-tripeptides are assembled by the nonribosomal peptide synthetases and released as N-(D-lysergyl-aminoacyl)-lactams. Cyclolization of the D-lysergyl-tripeptides is performed by the Fe(2+)/2-ketoglutarate-dependent dioxygenase easH which introduces a hydroxyl group into N-(D-lysergyl-aminoacyl)-lactam at alpha-C of the aminoacyl residue followed by spontaneous condensation with the terminal lactam carbonyl group. In Claviceps purpurea (Ergot fungus), this protein is 4-dimethylallyltryptophan N-methyltransferase easF.